We begin with the raw amino-acid sequence, 264 residues long: Thymidylate synthase (264 aa).

DUMP-binding positions include Arg-21 and 126 to 127 (RR). The active-site Nucleophile is Cys-146. Residues 166–169 (RSAD), Asn-177, and 207–209 (HLY) contribute to the dUMP site. Residue Asp-169 coordinates (6R)-5,10-methylene-5,6,7,8-tetrahydrofolate. Ala-263 lines the (6R)-5,10-methylene-5,6,7,8-tetrahydrofolate pocket.

It belongs to the thymidylate synthase family. Bacterial-type ThyA subfamily. Homodimer.

The protein localises to the cytoplasm. It carries out the reaction dUMP + (6R)-5,10-methylene-5,6,7,8-tetrahydrofolate = 7,8-dihydrofolate + dTMP. The protein operates within pyrimidine metabolism; dTTP biosynthesis. In terms of biological role, catalyzes the reductive methylation of 2'-deoxyuridine-5'-monophosphate (dUMP) to 2'-deoxythymidine-5'-monophosphate (dTMP) while utilizing 5,10-methylenetetrahydrofolate (mTHF) as the methyl donor and reductant in the reaction, yielding dihydrofolate (DHF) as a by-product. This enzymatic reaction provides an intracellular de novo source of dTMP, an essential precursor for DNA biosynthesis. The protein is Thymidylate synthase of Bradyrhizobium sp. (strain ORS 278).